Here is a 255-residue protein sequence, read N- to C-terminus: uncharacterized protein (255 aa).

It belongs to the methyltransferase superfamily.

This is an uncharacterized protein from Mycolicibacterium paratuberculosis (strain ATCC BAA-968 / K-10) (Mycobacterium paratuberculosis).